A 793-amino-acid chain; its full sequence is Serine/threonine-protein phosphatase BSU1 (793 aa).

Kelch repeat units lie at residues 53–109 (STTA…LYGT), 110–160 (LILI…IAAQ), 214–262 (IFLL…VFGG), 264–314 (KLHV…NQYQ), and 329–388 (HLYV…EASS). Ser395 and Ser444 each carry phosphoserine. Mn(2+)-binding residues include Asp510, His512, Asp544, and Asn576. The Proton donor role is filled by His577. His629 and His707 together coordinate Mn(2+). Ser764 carries the post-translational modification Phosphoserine.

The protein belongs to the PPP phosphatase family. BSU subfamily. As to quaternary structure, interacts with CDG1, CDL1 and ASK7/BIN2. It depends on Mn(2+) as a cofactor. Post-translationally, phosphorylated at Ser-395 and Ser-444. Phosphorylated at Ser-764 by CDG1 and CDL1. Mainly expressed in young, elongating tissues. In young seedlings, it is expressed at the base of the hypocotyl, at the tip and most peripheral cell layers of cotyledons, and in the vascular cylinder of roots, particularly in the elongation zone and at the point of emergence of lateral roots. In mature plants, it is still present in the root vasculature, but almost completely absent in fully expanded stems and leaves. In flowers, it is mainly expressed in sepal veins, anther filaments, and in the style, suggesting that BSU1 is expressed in actively growing regions and apparently enriched in vascular tissues.

It is found in the nucleus. The enzyme catalyses O-phospho-L-seryl-[protein] + H2O = L-seryl-[protein] + phosphate. The catalysed reaction is O-phospho-L-threonyl-[protein] + H2O = L-threonyl-[protein] + phosphate. With respect to regulation, activated by phosphorylation at Ser-764 by CDG1. In terms of biological role, phosphatase that acts as a positive regulator of brassinosteroid (BR) signaling. Dephosphorylates BES1, a transcription factor that regulates the expression of BR-response genes, thereby playing an important role in the regulation of response to BRs. Inactivates the negative regulator of BR signaling ASK7/BIN2 by dephosphorylation at 'Tyr-200'. In Arabidopsis thaliana (Mouse-ear cress), this protein is Serine/threonine-protein phosphatase BSU1 (BSU1).